The following is a 156-amino-acid chain: Protein GLUTAMINE DUMPER 4 (156 aa).

The Extracellular portion of the chain corresponds to 1–39 (MRPLSIKPTSLDVARHATSVESFGNHRPPISPWHSPVPY). A helical transmembrane segment spans residues 40–60 (LFGGLAAMLGLIAFALLILAC). At 61–156 (SYWRLSTSGD…AKENEETTSQ (96 aa)) the chain is on the cytoplasmic side. The segment at 67–87 (TSGDDSGERVDEEKESRSGVK) is disordered. The segment covering 72–84 (SGERVDEEKESRS) has biased composition (basic and acidic residues). The VIMAG signature appears at 99–103 (VIMAG). The segment at 136–156 (AGEEKMGDREKAKENEETTSQ) is disordered.

This sequence belongs to the GLUTAMINE DUMPER 1 (TC 9.B.60) family. As to expression, expressed in the vascular tissues, even in the minor veins of the leaves.

The protein localises to the membrane. Its function is as follows. Probable subunit of an amino acid transporter involved in the regulation of the amino acid metabolism. Stimulates amino acid export by activating nonselective amino acid facilitators. In Arabidopsis thaliana (Mouse-ear cress), this protein is Protein GLUTAMINE DUMPER 4 (GDU4).